A 910-amino-acid polypeptide reads, in one-letter code: Disease susceptibility protein LOV1 (910 aa).

A coiled-coil region spans residues 22–60 (ARLNGIGEQVDGLKRQLGRLQSLLKDADAKKHESERVRN). One can recognise an NB-ARC domain in the interval 169–461 (EQSVEALAGH…AAEGIITSSD (293 aa)). 6 LRR repeats span residues 584 to 609 (LPLL…IGDL), 610 to 632 (IHLR…LRNL), 634 to 655 (LLLY…LKEM), 700 to 725 (MTKL…LGQL), 726 to 751 (RSLE…IVLN), and 847 to 871 (MPLL…NYIT).

It belongs to the disease resistance NB-LRR family. RPP8/HRT subfamily.

Its function is as follows. Confers susceptibility to the fungus Cochliobolus victoriae by conditioning victorin-dependent (victorin is a toxin synthesized by C.victoriae) induction of defense-associated proteins. The sequence is that of Disease susceptibility protein LOV1 (LOV1) from Arabidopsis thaliana (Mouse-ear cress).